A 510-amino-acid chain; its full sequence is NAD(P)H-quinone oxidoreductase subunit 2, chloroplastic (510 aa).

A run of 13 helical transmembrane segments spans residues 26 to 46 (LFDGSFIFPECILIFGLILLL), 57 to 77 (IPWLYFISSTSLVMSIMALLF), 99 to 119 (IFQVLILLCSTLCIPLSVEYI), 124 to 144 (MAITEFLLFVLTATLGGMFLC), 149 to 169 (LITIFVAPECFSFCSYLLSGY), 184 to 204 (LLMGGASSSILVHGFSWLYGL), 227 to 247 (PGISIALIFITVGIGFKLSPA), 295 to 315 (WHLLLEILALLSMILGNLIAI), 323 to 343 (MLAYSSIGQIGYIIIGIIVGD), 354 to 374 (YMLFYISMNLGTFACIILFGL), 395 to 415 (ALSLALCLLSLGGLPPLAGFF), 418 to 438 (LYLFWCGWQAGLYFLVLIALV), and 484 to 504 (MIVCVIASTIPGISMNPIIAI).

Belongs to the complex I subunit 2 family. NDH is composed of at least 16 different subunits, 5 of which are encoded in the nucleus.

The protein resides in the plastid. It localises to the chloroplast thylakoid membrane. The enzyme catalyses a plastoquinone + NADH + (n+1) H(+)(in) = a plastoquinol + NAD(+) + n H(+)(out). It carries out the reaction a plastoquinone + NADPH + (n+1) H(+)(in) = a plastoquinol + NADP(+) + n H(+)(out). NDH shuttles electrons from NAD(P)H:plastoquinone, via FMN and iron-sulfur (Fe-S) centers, to quinones in the photosynthetic chain and possibly in a chloroplast respiratory chain. The immediate electron acceptor for the enzyme in this species is believed to be plastoquinone. Couples the redox reaction to proton translocation, and thus conserves the redox energy in a proton gradient. This Trachelium caeruleum (Blue throatwort) protein is NAD(P)H-quinone oxidoreductase subunit 2, chloroplastic.